Here is a 101-residue protein sequence, read N- to C-terminus: Apolipoprotein C-II (101 aa).

The signal sequence occupies residues 1-22 (MGTRFLLALCLVLLVLGFEVQG). The propeptide at 23–28 (AQLPQQ) is removed in mature form. A lipid binding region spans residues 66-74 (AVDEKLRDL). The segment at 78 to 101 (STAAMSTYTGIFTDQVLSVLKGEE) is lipoprotein lipase cofactor.

The protein belongs to the apolipoprotein C2 family. Post-translationally, proapolipoprotein C-II is synthesized as a sialic acid containing glycoprotein which is subsequently desialylated prior to its proteolytic processing. In terms of processing, proapolipoprotein C-II, the major form found in plasma undergoes proteolytic cleavage of its N-terminal hexapeptide to generate apolipoprotein C-II, which occurs as the minor form in plasma.

The protein localises to the secreted. Functionally, component of chylomicrons, very low-density lipoproteins (VLDL), low-density lipoproteins (LDL), and high-density lipoproteins (HDL) in plasma. Plays an important role in lipoprotein metabolism as an activator of lipoprotein lipase. Both proapolipoprotein C-II and apolipoprotein C-II can activate lipoprotein lipase. The chain is Apolipoprotein C-II (APOC2) from Papio anubis (Olive baboon).